The primary structure comprises 594 residues: MHEHLKEKLAILPDQPGCYLMKDKQGTVIYVGKAKVLKNRVRSYFTGSHDGKTLRLVGEIVDFEYIVTSSNLEALILELNLIKKHDPKYNIQLKDDKTYPFIKITAEKQPRLLITRNVKKDKGKYFGPYPNAQSAHETKKLLDRMYPLRKCSNMPDKVCLYYHMGQCLAPCVKEVTEEQNKEIVDEIIKFLNGGHKEVRSELETKMYEASEKLEFERAKELRDQIAHIDAIMEKQKMIMSDLVDRDVFGYAVDKGWMCVQVFFVRKGKLIERDVSMFPIYDEPEEGFLTFIGQFYENSSHFKPKEIVVPGSIDSELVERFLEVEATQPKRGKKKDLVELANKNAKIALEEKFYLIERDEERTIKAVENLGEQLGIETPYRIEAFDNSNIQGTNPVSAMIAFIDGKPAKKEYRKYKIKTVQGPDDYESMREVVRRRYTRALKEGLPLPDLIIIDGGKGHLAAASDVLENELGLYIPMAGLVKDDKHKTSHLIIGDPPEPVMLERNSQEFYLLQRIQDEVHRFAITFHRQLHGKSVIQSALDDIPGIGDKRKKILLKHFGSLKKMKEASVTEFVEAGMPKNVAETIYSYLADKKTL.

Residues 14–91 form the GIY-YIG domain; sequence DQPGCYLMKD…IKKHDPKYNI (78 aa). The UVR domain occupies 196-231; sequence KEVRSELETKMYEASEKLEFERAKELRDQIAHIDAI.

This sequence belongs to the UvrC family. As to quaternary structure, interacts with UvrB in an incision complex.

It localises to the cytoplasm. Functionally, the UvrABC repair system catalyzes the recognition and processing of DNA lesions. UvrC both incises the 5' and 3' sides of the lesion. The N-terminal half is responsible for the 3' incision and the C-terminal half is responsible for the 5' incision. This Bacillus cereus (strain Q1) protein is UvrABC system protein C.